We begin with the raw amino-acid sequence, 385 residues long: Acetate kinase (385 aa).

Asn-9 contributes to the Mg(2+) binding site. Residue Lys-16 coordinates ATP. A substrate-binding site is contributed by Arg-87. The active-site Proton donor/acceptor is the Asp-144. ATP contacts are provided by residues 202–206 (HLGSG) and 277–279 (DMR). Glu-373 provides a ligand contact to Mg(2+).

Belongs to the acetokinase family. Homodimer. Requires Mg(2+) as cofactor. It depends on Mn(2+) as a cofactor.

The protein resides in the cytoplasm. The catalysed reaction is acetate + ATP = acetyl phosphate + ADP. The protein operates within metabolic intermediate biosynthesis; acetyl-CoA biosynthesis; acetyl-CoA from acetate: step 1/2. Catalyzes the formation of acetyl phosphate from acetate and ATP. Can also catalyze the reverse reaction. This chain is Acetate kinase, found in Rickettsia felis (strain ATCC VR-1525 / URRWXCal2) (Rickettsia azadi).